Reading from the N-terminus, the 287-residue chain is Flagellin (287 aa).

It belongs to the bacterial flagellin family.

Its subcellular location is the secreted. It localises to the bacterial flagellum. Its function is as follows. Flagellin is the subunit protein which polymerizes to form the filaments of bacterial flagella. The sequence is that of Flagellin (flaA) from Listeria innocua serovar 6a (strain ATCC BAA-680 / CLIP 11262).